The primary structure comprises 271 residues: Exosome complex component Rrp42 (271 aa).

The protein belongs to the RNase PH family. Rrp42 subfamily. In terms of assembly, component of the archaeal exosome complex. Forms a hexameric ring-like arrangement composed of 3 Rrp41-Rrp42 heterodimers. The hexameric ring associates with a trimer of Rrp4 and/or Csl4 subunits.

The protein localises to the cytoplasm. Its function is as follows. Non-catalytic component of the exosome, which is a complex involved in RNA degradation. Contributes to the structuring of the Rrp41 active site. In Methanothermobacter thermautotrophicus (strain ATCC 29096 / DSM 1053 / JCM 10044 / NBRC 100330 / Delta H) (Methanobacterium thermoautotrophicum), this protein is Exosome complex component Rrp42.